The chain runs to 231 residues: Ribose-5-phosphate isomerase A (231 aa).

Substrate contacts are provided by residues 28–31 (TGST), 83–86 (DGAD), and 96–99 (KGGG). Catalysis depends on Glu-105, which acts as the Proton acceptor. Substrate is bound at residue Lys-123.

Belongs to the ribose 5-phosphate isomerase family. As to quaternary structure, homodimer.

It catalyses the reaction aldehydo-D-ribose 5-phosphate = D-ribulose 5-phosphate. It participates in carbohydrate degradation; pentose phosphate pathway; D-ribose 5-phosphate from D-ribulose 5-phosphate (non-oxidative stage): step 1/1. Catalyzes the reversible conversion of ribose-5-phosphate to ribulose 5-phosphate. The sequence is that of Ribose-5-phosphate isomerase A from Sinorhizobium fredii (strain NBRC 101917 / NGR234).